We begin with the raw amino-acid sequence, 147 residues long: Phosphoribosyl-AMP cyclohydrolase (147 aa).

Mg(2+) is bound at residue Asp91. Zn(2+) is bound at residue Cys92. 2 residues coordinate Mg(2+): Asp93 and Asp95. Positions 109 and 116 each coordinate Zn(2+).

This sequence belongs to the PRA-CH family. As to quaternary structure, homodimer. Requires Mg(2+) as cofactor. Zn(2+) is required as a cofactor.

The protein localises to the cytoplasm. The catalysed reaction is 1-(5-phospho-beta-D-ribosyl)-5'-AMP + H2O = 1-(5-phospho-beta-D-ribosyl)-5-[(5-phospho-beta-D-ribosylamino)methylideneamino]imidazole-4-carboxamide. Its pathway is amino-acid biosynthesis; L-histidine biosynthesis; L-histidine from 5-phospho-alpha-D-ribose 1-diphosphate: step 3/9. Catalyzes the hydrolysis of the adenine ring of phosphoribosyl-AMP. The protein is Phosphoribosyl-AMP cyclohydrolase of Rhodopseudomonas palustris (strain BisB18).